The chain runs to 173 residues: Mitochondrial holo-[acyl-carrier-protein] synthase (173 aa).

Belongs to the P-Pant transferase superfamily. AcpS family.

Its subcellular location is the mitochondrion. It carries out the reaction apo-[ACP] + CoA = holo-[ACP] + adenosine 3',5'-bisphosphate + H(+). Functionally, transfers the 4'-phosphopantetheine moiety from coenzyme A to a Ser of mitochondrial acyl-carrier-protein. The chain is Mitochondrial holo-[acyl-carrier-protein] synthase (PPT2) from Saccharomyces cerevisiae (strain ATCC 204508 / S288c) (Baker's yeast).